We begin with the raw amino-acid sequence, 312 residues long: Homeobox-leucine zipper protein ATHB-5 (312 aa).

A disordered region spans residues 1 to 33; that stretch reads MKRSRGSSDSLSGFLPIRHSTTDKQISPRPTTT. Positions 23 to 33 are enriched in polar residues; it reads DKQISPRPTTT. The homeobox DNA-binding region spans 69-128; that stretch reads AAEKKRRLGVEQVKALEKNFEIDNKLEPERKVKLAQELGLQPRQVAIWFQNRRARWKTKQ. The tract at residues 129–164 is leucine-zipper; it reads LERDYGVLKSNFDALKRNRDSLQRDNDSLLGQIKEL.

The protein belongs to the HD-ZIP homeobox family. Class I subfamily. Interacts with DNA as homodimer. As to expression, widely expressed.

It localises to the nucleus. Its function is as follows. Probable transcription factor that acts as a positive regulator of ABA-responsiveness, mediating the inhibitory effect of ABA on growth during seedling establishment. Binds to the DNA sequence 5'-CAATNATTG-3'. The chain is Homeobox-leucine zipper protein ATHB-5 (ATHB-5) from Arabidopsis thaliana (Mouse-ear cress).